Here is a 111-residue protein sequence, read N- to C-terminus: Ig kappa chain V-III region PC 7940 (111 aa).

Residues 1–23 form a framework-1 region; the sequence is DIVLTQSPASLAVSLGQRATISC. An intrachain disulfide couples Cys23 to Cys92. The segment at 24 to 38 is complementarity-determining-1; the sequence is RASKSVSAFGYSYMH. Positions 39-53 are framework-2; sequence WYQQKPGQPPKLLIY. The complementarity-determining-2 stretch occupies residues 54–60; the sequence is LASNLES. Residues 61-92 are framework-3; sequence GVPARFSGSGSGTDFTLNIHPVEEEDAVTYYC. The interval 93-101 is complementarity-determining-3; sequence QHSRELPPT. The framework-4 stretch occupies residues 102 to 111; sequence FGGGTKLEIK.

This Mus musculus (Mouse) protein is Ig kappa chain V-III region PC 7940.